The primary structure comprises 123 residues: Large ribosomal subunit protein uL18 (123 aa).

Belongs to the universal ribosomal protein uL18 family. Part of the 50S ribosomal subunit; part of the 5S rRNA/L5/L18/L25 subcomplex. Contacts the 5S and 23S rRNAs.

In terms of biological role, this is one of the proteins that bind and probably mediate the attachment of the 5S RNA into the large ribosomal subunit, where it forms part of the central protuberance. This Symbiobacterium thermophilum (strain DSM 24528 / JCM 14929 / IAM 14863 / T) protein is Large ribosomal subunit protein uL18.